Consider the following 206-residue polypeptide: Nucleoside triphosphate pyrophosphatase (206 aa).

The active-site Proton acceptor is D78.

This sequence belongs to the Maf family. The cofactor is a divalent metal cation.

The protein resides in the cytoplasm. It carries out the reaction a ribonucleoside 5'-triphosphate + H2O = a ribonucleoside 5'-phosphate + diphosphate + H(+). The catalysed reaction is a 2'-deoxyribonucleoside 5'-triphosphate + H2O = a 2'-deoxyribonucleoside 5'-phosphate + diphosphate + H(+). In terms of biological role, nucleoside triphosphate pyrophosphatase. May have a dual role in cell division arrest and in preventing the incorporation of modified nucleotides into cellular nucleic acids. In Prochlorococcus marinus (strain MIT 9312), this protein is Nucleoside triphosphate pyrophosphatase.